We begin with the raw amino-acid sequence, 188 residues long: GMP synthase [glutamine-hydrolyzing] subunit A (188 aa).

Residues 2-188 form the Glutamine amidotransferase type-1 domain; that stretch reads KVGLVYYGGQ…FKNFLGVCRK (187 aa). Cys-79 serves as the catalytic Nucleophile. Active-site residues include His-166 and Glu-168.

Heterodimer composed of a glutamine amidotransferase subunit (A) and a GMP-binding subunit (B).

The catalysed reaction is XMP + L-glutamine + ATP + H2O = GMP + L-glutamate + AMP + diphosphate + 2 H(+). It functions in the pathway purine metabolism; GMP biosynthesis; GMP from XMP (L-Gln route): step 1/1. Its function is as follows. Catalyzes the synthesis of GMP from XMP. The chain is GMP synthase [glutamine-hydrolyzing] subunit A from Saccharolobus solfataricus (strain ATCC 35092 / DSM 1617 / JCM 11322 / P2) (Sulfolobus solfataricus).